The primary structure comprises 217 residues: uncharacterized protein (217 aa).

Residues 98–203 (QRRQYVRTDA…GDQQALLQYC (106 aa)) enclose the PilZ domain.

This is an uncharacterized protein from Bacillus subtilis (strain 168).